Consider the following 254-residue polypeptide: Probable septum site-determining protein MinC (254 aa).

The protein belongs to the MinC family. As to quaternary structure, interacts with MinD and FtsZ.

Cell division inhibitor that blocks the formation of polar Z ring septums. Rapidly oscillates between the poles of the cell to destabilize FtsZ filaments that have formed before they mature into polar Z rings. Prevents FtsZ polymerization. This chain is Probable septum site-determining protein MinC, found in Burkholderia ambifaria (strain ATCC BAA-244 / DSM 16087 / CCUG 44356 / LMG 19182 / AMMD) (Burkholderia cepacia (strain AMMD)).